The following is a 373-amino-acid chain: Erythronate-4-phosphate dehydrogenase (373 aa).

The substrate site is built by Ser-45 and Thr-66. Asp-146 and Thr-173 together coordinate NAD(+). Arg-206 is an active-site residue. Asp-230 provides a ligand contact to NAD(+). The active site involves Glu-235. His-252 acts as the Proton donor in catalysis. Gly-255 serves as a coordination point for NAD(+). Residue Tyr-256 coordinates substrate.

It belongs to the D-isomer specific 2-hydroxyacid dehydrogenase family. PdxB subfamily. As to quaternary structure, homodimer.

Its subcellular location is the cytoplasm. The catalysed reaction is 4-phospho-D-erythronate + NAD(+) = (R)-3-hydroxy-2-oxo-4-phosphooxybutanoate + NADH + H(+). Its pathway is cofactor biosynthesis; pyridoxine 5'-phosphate biosynthesis; pyridoxine 5'-phosphate from D-erythrose 4-phosphate: step 2/5. Catalyzes the oxidation of erythronate-4-phosphate to 3-hydroxy-2-oxo-4-phosphonooxybutanoate. The protein is Erythronate-4-phosphate dehydrogenase of Saccharophagus degradans (strain 2-40 / ATCC 43961 / DSM 17024).